A 376-amino-acid chain; its full sequence is Succinyl-diaminopimelate desuccinylase (376 aa).

His67 serves as a coordination point for Zn(2+). Residue Asp69 is part of the active site. Asp100 is a binding site for Zn(2+). Glu134 functions as the Proton acceptor in the catalytic mechanism. The Zn(2+) site is built by Glu135, Glu163, and His349.

Belongs to the peptidase M20A family. DapE subfamily. In terms of assembly, homodimer. Requires Zn(2+) as cofactor. Co(2+) serves as cofactor.

The catalysed reaction is N-succinyl-(2S,6S)-2,6-diaminopimelate + H2O = (2S,6S)-2,6-diaminopimelate + succinate. Its pathway is amino-acid biosynthesis; L-lysine biosynthesis via DAP pathway; LL-2,6-diaminopimelate from (S)-tetrahydrodipicolinate (succinylase route): step 3/3. In terms of biological role, catalyzes the hydrolysis of N-succinyl-L,L-diaminopimelic acid (SDAP), forming succinate and LL-2,6-diaminopimelate (DAP), an intermediate involved in the bacterial biosynthesis of lysine and meso-diaminopimelic acid, an essential component of bacterial cell walls. The sequence is that of Succinyl-diaminopimelate desuccinylase from Shewanella woodyi (strain ATCC 51908 / MS32).